The primary structure comprises 586 residues: Phosphatase and actin regulator 1 (586 aa).

Positions 62–83 (RRRSKFATLGRLFKPWKWRKKK) match the Nuclear localization signal motif. One copy of the RPEL 1 repeat lies at 92-117 (AALERKISMRQSREELIKRGVLKEMY). The segment at 373 to 414 (ECEDDKENVPHETSYDDSSCLYSRDEEEDDDDDDDDEDDDSS) is disordered. The span at 397-413 (DEEEDDDDDDDDEDDDS) shows a compositional bias: acidic residues. 3 RPEL repeats span residues 428-453 (DSLA…PMQT), 466-491 (TKLT…KPRN), and 504-529 (RRLT…ISFS).

The protein belongs to the phosphatase and actin regulator family. In terms of assembly, interacts (via RPEL repeats) with ACTA1.

The protein resides in the cytoplasm. It is found in the synapse. The protein localises to the nucleus. In terms of biological role, binds actin monomers (G actin) and plays a role in the reorganization of the actin cytoskeleton and in formation of actin stress fibers. The sequence is that of Phosphatase and actin regulator 1 (phactr1) from Xenopus laevis (African clawed frog).